We begin with the raw amino-acid sequence, 613 residues long: Probable potassium transport system protein Kup (613 aa).

Helical transmembrane passes span 38–58 (VLGV…LKYL), 91–111 (WILV…GMIT), 128–148 (PSFG…LFLF), 159–179 (FFGP…LVEI), 206–226 (FLVL…YADM), 238–258 (WSLL…AVLL), 270–290 (ALVP…ATII), 328–348 (IYVP…VAGF), 357–377 (AYGV…YYVA), 387–407 (GLNL…GASV), and 410–430 (LFHG…LMLT).

This sequence belongs to the HAK/KUP transporter (TC 2.A.72) family.

The protein localises to the cell inner membrane. The enzyme catalyses K(+)(in) + H(+)(in) = K(+)(out) + H(+)(out). In terms of biological role, transport of potassium into the cell. Likely operates as a K(+):H(+) symporter. This is Probable potassium transport system protein Kup from Chlorobaculum tepidum (strain ATCC 49652 / DSM 12025 / NBRC 103806 / TLS) (Chlorobium tepidum).